We begin with the raw amino-acid sequence, 513 residues long: 2-isopropylmalate synthase (513 aa).

The region spanning 4-266 is the Pyruvate carboxyltransferase domain; it reads IEFFDTSLRD…KSPLVLAETM (263 aa). 4 residues coordinate Mn(2+): aspartate 13, histidine 201, histidine 203, and asparagine 237. The regulatory domain stretch occupies residues 390-513; that stretch reads ILNNVQIDGH…VEQISAHDGI (124 aa).

This sequence belongs to the alpha-IPM synthase/homocitrate synthase family. LeuA type 1 subfamily. As to quaternary structure, homodimer. The cofactor is Mn(2+).

Its subcellular location is the cytoplasm. It catalyses the reaction 3-methyl-2-oxobutanoate + acetyl-CoA + H2O = (2S)-2-isopropylmalate + CoA + H(+). It participates in amino-acid biosynthesis; L-leucine biosynthesis; L-leucine from 3-methyl-2-oxobutanoate: step 1/4. In terms of biological role, catalyzes the condensation of the acetyl group of acetyl-CoA with 3-methyl-2-oxobutanoate (2-ketoisovalerate) to form 3-carboxy-3-hydroxy-4-methylpentanoate (2-isopropylmalate). The polypeptide is 2-isopropylmalate synthase (Lactococcus lactis subsp. cremoris (strain SK11)).